Reading from the N-terminus, the 242-residue chain is 1-(5-phosphoribosyl)-5-[(5-phosphoribosylamino)methylideneamino] imidazole-4-carboxamide isomerase (242 aa).

The Proton acceptor role is filled by D10. Residue D132 is the Proton donor of the active site.

This sequence belongs to the HisA/HisF family.

Its subcellular location is the cytoplasm. The catalysed reaction is 1-(5-phospho-beta-D-ribosyl)-5-[(5-phospho-beta-D-ribosylamino)methylideneamino]imidazole-4-carboxamide = 5-[(5-phospho-1-deoxy-D-ribulos-1-ylimino)methylamino]-1-(5-phospho-beta-D-ribosyl)imidazole-4-carboxamide. It participates in amino-acid biosynthesis; L-histidine biosynthesis; L-histidine from 5-phospho-alpha-D-ribose 1-diphosphate: step 4/9. This Streptococcus sanguinis (strain SK36) protein is 1-(5-phosphoribosyl)-5-[(5-phosphoribosylamino)methylideneamino] imidazole-4-carboxamide isomerase.